Here is a 1048-residue protein sequence, read N- to C-terminus: Bifunctional heparan sulfate N-deacetylase/N-sulfotransferase (1048 aa).

At 1–172 the chain is on the cytoplasmic side; the sequence is MTISGGNQHN…RRCFGINVRR (172 aa). A helical; Signal-anchor for type II membrane protein transmembrane segment spans residues 173-192; the sequence is CVLALLAITMVSIFYYTHYV. Positions 192-752 are heparan sulfate N-deacetylase; it reads VDTGVFNGLI…VRHKKIWSKT (561 aa). Over 193–1048 the chain is Lumenal; that stretch reads DTGVFNGLIQ…WLKDDLSTGT (856 aa). Residues Asn388 and Asn555 are each glycosylated (N-linked (GlcNAc...) asparagine). The tract at residues 753-1048 is heparan sulfate N-sulfotransferase; that stretch reads KNCDSLPKFL…WLKDDLSTGT (296 aa). Catalysis depends on Lys768, which acts as the For sulfotransferase activity. Residue 768–772 coordinates 3'-phosphoadenylyl sulfate; the sequence is KTGTT. The N-linked (GlcNAc...) asparagine glycan is linked to Asn823. Residue Ser877 participates in 3'-phosphoadenylyl sulfate binding. N-linked (GlcNAc...) asparagine glycosylation occurs at Asn892. Cys983 and Cys993 are disulfide-bonded. 998 to 1002 contacts 3'-phosphoadenylyl sulfate; the sequence is KGRQY.

Belongs to the sulfotransferase 1 family. NDST subfamily. As to quaternary structure, monomer.

It localises to the golgi apparatus membrane. The enzyme catalyses alpha-D-glucosaminyl-[heparan sulfate](n) + 3'-phosphoadenylyl sulfate = N-sulfo-alpha-D-glucosaminyl-[heparan sulfate](n) + adenosine 3',5'-bisphosphate + 2 H(+). It participates in glycan metabolism; heparan sulfate biosynthesis. It functions in the pathway glycan metabolism; heparin biosynthesis. Essential bifunctional enzyme that catalyzes both the N-deacetylation and the N-sulfation of glucosamine (GlcNAc) of the glycosaminoglycan in heparan sulfate. Modifies the GlcNAc-GlcA disaccharide repeating sugar backbone to make N-sulfated heparosan, a prerequisite substrate for later modifications in heparin biosynthesis. Plays a role in diffusion of morphogen wingless (wg) via its role in heparan sulfate proteoglycans (HSPGs) biosynthesis, HSPGs being required for movement of wg morphogens. Required for wg signaling during both embryonic and imaginal disk development. Also required for FGF receptor signaling. This chain is Bifunctional heparan sulfate N-deacetylase/N-sulfotransferase (sfl), found in Drosophila melanogaster (Fruit fly).